Consider the following 385-residue polypeptide: Probable caffeine synthase 4 (385 aa).

Residues Tyr18, Cys62, Asn67, Asp101, Leu102, Ser140, and Phe141 each contribute to the S-adenosyl-L-homocysteine site. Caffeine-binding residues include Tyr158, Gln161, and Phe162. Mg(2+) is bound at residue Asn179. Position 238 (Thr238) interacts with caffeine. 3 residues coordinate Mg(2+): Asp261, Phe263, and Asn264. Tyr369 lines the caffeine pocket.

It belongs to the methyltransferase superfamily. Type-7 methyltransferase family. Mg(2+) serves as cofactor. Expressed in roots, stems, young and old leaves.

Its pathway is alkaloid biosynthesis. Functionally, may be involved in the biosynthesis of caffeine. This is Probable caffeine synthase 4 from Coffea arabica (Arabian coffee).